We begin with the raw amino-acid sequence, 556 residues long: Urocanate hydratase (556 aa).

NAD(+)-binding positions include 52–53, glutamine 130, 176–178, glutamate 196, arginine 201, 242–243, 263–267, 273–274, and tyrosine 322; these read GG, GMG, NA, QTSAH, and YL. The active site involves cysteine 410. NAD(+) is bound at residue glycine 492.

Belongs to the urocanase family. Requires NAD(+) as cofactor.

The protein localises to the cytoplasm. The enzyme catalyses 4-imidazolone-5-propanoate = trans-urocanate + H2O. It functions in the pathway amino-acid degradation; L-histidine degradation into L-glutamate; N-formimidoyl-L-glutamate from L-histidine: step 2/3. Functionally, catalyzes the conversion of urocanate to 4-imidazolone-5-propionate. This Shewanella sediminis (strain HAW-EB3) protein is Urocanate hydratase.